A 518-amino-acid chain; its full sequence is Glutamate--cysteine ligase (518 aa).

It belongs to the glutamate--cysteine ligase type 1 family. Type 1 subfamily.

It carries out the reaction L-cysteine + L-glutamate + ATP = gamma-L-glutamyl-L-cysteine + ADP + phosphate + H(+). It participates in sulfur metabolism; glutathione biosynthesis; glutathione from L-cysteine and L-glutamate: step 1/2. The protein is Glutamate--cysteine ligase of Salmonella paratyphi C (strain RKS4594).